A 309-amino-acid chain; its full sequence is tRNA pseudouridine synthase B (309 aa).

Aspartate 51 (nucleophile) is an active-site residue.

The protein belongs to the pseudouridine synthase TruB family. Type 1 subfamily.

It catalyses the reaction uridine(55) in tRNA = pseudouridine(55) in tRNA. In terms of biological role, responsible for synthesis of pseudouridine from uracil-55 in the psi GC loop of transfer RNAs. In Coxiella burnetii (strain RSA 493 / Nine Mile phase I), this protein is tRNA pseudouridine synthase B.